A 489-amino-acid polypeptide reads, in one-letter code: Ent-kaurenoic acid oxidase 2 (489 aa).

A helical membrane pass occupies residues 5 to 25 (GLILMWFPLIILGLFVLKWVL). Residue cysteine 436 coordinates heme.

It belongs to the cytochrome P450 family. Heme serves as cofactor. Widely expressed. Highly expressed in influorescence stem, influorescence, and silique tissue. Weakly expressed in cauline and rosette leaves. Expressed at a weaker level in stem and influorescence than AtKAO1/CYP88A3.

The protein localises to the endoplasmic reticulum membrane. The catalysed reaction is ent-kaur-16-en-19-oate + 3 reduced [NADPH--hemoprotein reductase] + 3 O2 = gibberellin A12 + 3 oxidized [NADPH--hemoprotein reductase] + 4 H2O + 4 H(+). It catalyses the reaction ent-kaur-16-en-19-oate + reduced [NADPH--hemoprotein reductase] + O2 = ent-7alpha-hydroxykaur-16-en-19-oate + oxidized [NADPH--hemoprotein reductase] + H2O + H(+). The enzyme catalyses ent-7alpha-hydroxykaur-16-en-19-oate + reduced [NADPH--hemoprotein reductase] + O2 = gibberellin A12 aldehyde + oxidized [NADPH--hemoprotein reductase] + 2 H2O + H(+). It carries out the reaction gibberellin A12 aldehyde + reduced [NADPH--hemoprotein reductase] + O2 = gibberellin A12 + oxidized [NADPH--hemoprotein reductase] + H2O + 2 H(+). It participates in plant hormone biosynthesis; gibberellin biosynthesis. Functionally, catalyzes three successive oxidations of ent-kaurenoic acid giving gibberellin 12 (GA12), a key step in gibberellins (GAs) biosynthesis. GAs, which are involved many processes, including stem elongation, play a central role in plant development. The polypeptide is Ent-kaurenoic acid oxidase 2 (Arabidopsis thaliana (Mouse-ear cress)).